Here is a 198-residue protein sequence, read N- to C-terminus: Nucleoid occlusion factor SlmA (198 aa).

One can recognise an HTH tetR-type domain in the interval 9 to 70; the sequence is RNRREEILQA…SLIEFIEDTL (62 aa). Positions 33–52 form a DNA-binding region, H-T-H motif; the sequence is TTAKLAANVGVSEAALYRHF. Positions 117-144 form a coiled coil; the sequence is EQDRLQGRINQLFERIEAQLRQVLKERR.

It belongs to the nucleoid occlusion factor SlmA family. In terms of assembly, homodimer. Interacts with FtsZ.

Its subcellular location is the cytoplasm. The protein resides in the nucleoid. Required for nucleoid occlusion (NO) phenomenon, which prevents Z-ring formation and cell division over the nucleoid. Acts as a DNA-associated cell division inhibitor that binds simultaneously chromosomal DNA and FtsZ, and disrupts the assembly of FtsZ polymers. SlmA-DNA-binding sequences (SBS) are dispersed on non-Ter regions of the chromosome, preventing FtsZ polymerization at these regions. This is Nucleoid occlusion factor SlmA from Edwardsiella ictaluri (strain 93-146).